The sequence spans 230 residues: Cytidylate kinase (230 aa).

Residue 16–24 (GPASAGKST) coordinates ATP.

The protein belongs to the cytidylate kinase family. Type 1 subfamily.

It localises to the cytoplasm. The catalysed reaction is CMP + ATP = CDP + ADP. It catalyses the reaction dCMP + ATP = dCDP + ADP. The polypeptide is Cytidylate kinase (Lactobacillus johnsonii (strain CNCM I-12250 / La1 / NCC 533)).